Consider the following 331-residue polypeptide: Glyceraldehyde-3-phosphate dehydrogenase (331 aa).

NAD(+) is bound by residues 11 to 12 (RI), D33, and R78. Residues 148-150 (SCT), T179, 208-209 (TG), and R231 each bind D-glyceraldehyde 3-phosphate. The Nucleophile role is filled by C149. N313 lines the NAD(+) pocket.

Belongs to the glyceraldehyde-3-phosphate dehydrogenase family. Homotetramer.

Its subcellular location is the cytoplasm. It carries out the reaction D-glyceraldehyde 3-phosphate + phosphate + NAD(+) = (2R)-3-phospho-glyceroyl phosphate + NADH + H(+). Its pathway is carbohydrate degradation; glycolysis; pyruvate from D-glyceraldehyde 3-phosphate: step 1/5. The protein is Glyceraldehyde-3-phosphate dehydrogenase (GPD) of Eremothecium gossypii (strain ATCC 10895 / CBS 109.51 / FGSC 9923 / NRRL Y-1056) (Yeast).